The sequence spans 422 residues: UDP-N-acetylglucosamine 1-carboxyvinyltransferase (422 aa).

A phosphoenolpyruvate-binding site is contributed by 22–23 (KN). Arginine 93 contributes to the UDP-N-acetyl-alpha-D-glucosamine binding site. The Proton donor role is filled by cysteine 117. Cysteine 117 is modified (2-(S-cysteinyl)pyruvic acid O-phosphothioketal). UDP-N-acetyl-alpha-D-glucosamine-binding positions include 122–126 (RPVDL), aspartate 308, and leucine 330.

It belongs to the EPSP synthase family. MurA subfamily.

Its subcellular location is the cytoplasm. It carries out the reaction phosphoenolpyruvate + UDP-N-acetyl-alpha-D-glucosamine = UDP-N-acetyl-3-O-(1-carboxyvinyl)-alpha-D-glucosamine + phosphate. Its pathway is cell wall biogenesis; peptidoglycan biosynthesis. Functionally, cell wall formation. Adds enolpyruvyl to UDP-N-acetylglucosamine. This Helicobacter pylori (strain HPAG1) protein is UDP-N-acetylglucosamine 1-carboxyvinyltransferase.